The chain runs to 429 residues: MSNLVLKNCKTIDNKIVNIIIENGIIKDIKKTILPSEKETDTICDIKENIIIPGLIDTHVHLRDPGMTQKETWTTGTQAAAHGGYTTIIDMPNTLPATDTKKAFQEKRNIATKKSYVDFGLHAGVKTRQDVMDIMSEKPASYKIFMDLYTNKQLDEMFNYVSQTNKPLSLHCEDKTLVDYNIKTMKKNPLNKNKTITYSYARSALAELIAVNRAIEFAKKYKLQLHLCHISTRQTLELIHEAKEKLNISIEATPHHIFLDNTTYERYGVKAKTNPPLRDSNYNITIDNLNEFDSIGTDHAPHTIEEKEKDTWKSAAGIPGLETALKLLLTEVNNKRLTLEQLVKLTSTNPANIFNIPNKGKIKKGYDADITVINMKETGKISIENTYTKAKYTPFENRDYVGSNIMTINRGNIISQDNDVYKYDSKYIY.

2 residues coordinate Zn(2+): His59 and His61. Substrate contacts are provided by residues 61 to 63 and Asn93; that span reads HLR. 4 residues coordinate Zn(2+): Lys143, His171, His229, and Asp298. Lys143 is subject to N6-carboxylysine. Asp298 is an active-site residue. Substrate contacts are provided by residues His302 and 316–317; that span reads AG.

The protein belongs to the metallo-dependent hydrolases superfamily. DHOase family. Class I DHOase subfamily. Zn(2+) is required as a cofactor.

The enzyme catalyses (S)-dihydroorotate + H2O = N-carbamoyl-L-aspartate + H(+). Its pathway is pyrimidine metabolism; UMP biosynthesis via de novo pathway; (S)-dihydroorotate from bicarbonate: step 3/3. Functionally, catalyzes the reversible cyclization of carbamoyl aspartate to dihydroorotate. The chain is Dihydroorotase from Methanosphaera stadtmanae (strain ATCC 43021 / DSM 3091 / JCM 11832 / MCB-3).